A 177-amino-acid chain; its full sequence is Large ribosomal subunit protein uL6 (177 aa).

This sequence belongs to the universal ribosomal protein uL6 family. As to quaternary structure, part of the 50S ribosomal subunit.

This protein binds to the 23S rRNA, and is important in its secondary structure. It is located near the subunit interface in the base of the L7/L12 stalk, and near the tRNA binding site of the peptidyltransferase center. The polypeptide is Large ribosomal subunit protein uL6 (Azorhizobium caulinodans (strain ATCC 43989 / DSM 5975 / JCM 20966 / LMG 6465 / NBRC 14845 / NCIMB 13405 / ORS 571)).